The following is a 198-amino-acid chain: C4b-binding protein beta chain (198 aa).

Residues 1 to 17 (MFFWLMCYLVDVWLISA) form the signal peptide. Residues 22 to 77 (HCPDPLLVTDEFSSLEPVNVNDTFMFKCNEHCIFKGSNWSQCRENHTRVTHSPVSK) form the Sushi 1; atypical; lacks a Cys domain. Residues asparagine 42, asparagine 59, and asparagine 66 are each glycosylated (N-linked (GlcNAc...) asparagine). Positions 79-135 (RDCGPPETPTHGYFEGRDFKSGSTITYYCEARYRLVGTQHQQCIDGEWTSAPPICEL) constitute a Sushi 2 domain. Disulfide bonds link cysteine 81–cysteine 121 and cysteine 107–cysteine 133.

In terms of assembly, disulfide-linked complex of alpha and beta chains.

Its subcellular location is the secreted. In terms of biological role, controls the classical pathway of complement activation. It binds as a cofactor to C3b/C4b inactivator (C3bINA), which then hydrolyzes the complement fragment C4b. It also accelerates the degradation of the C4bC2a complex (C3 convertase) by dissociating the complement fragment C2a. It also interacts with serum amyloid P component. The protein is C4b-binding protein beta chain (C4BPB) of Bos taurus (Bovine).